The primary structure comprises 644 residues: MAKNLILWLVIAVVLMSVFQSFGPSESNGRKVDYSTFLQEVNQDQVREARINGREINVTKKDSNRYTTYIPINDPKLLDNLLTKNVKVVGEPPEEPSLLASIFISWFPMLLLIGVWIFFMRQMQGGGGKGAMSFGKSKARMLTEDQIKTTFADVAGCDEAKEEVAELVEYLREPSRFQKLGGKIPKGVLMVGPPGTGKTLLAKAIAGEAKVPFFTISGSDFVEMFVGVGASRVRDMFEQAKKAAPCIIFIDEIDAVGRQRGAGLGGGHDEREQTLNQMLVEMDGFEGNEGIIVIAATNRPDVLDPALLRPGRFDRQVVVGLPDVRGREQILKVHMRRVPLATDIDAAIIARGTPGFSGADLANLVNEAALFAARGNKRVVSMVEFEKAKDKIMMGAERRSMVMTEAQKESTAYHEAGHAIIGRLVPEHDPVHKVTIIPRGRALGVTFFLPEGDAISASRQKLESQISTLYGGRLAEEIIYGVEHVSTGASNDIKVATNLARNMVTQWGFSEKLGPLLYAEEEGEVFLGRSVAKAKHMSDETARIIDQEVKALIERNYNRARQILTDNMDILHAMKDALMKYETIDAPQIDDLMARREVRPPAGWEDPNGTNNSDSNGTPQAPRPVDEPRTPNPGNTMSEQLGDK.

Over 1–4 the chain is Cytoplasmic; the sequence is MAKN. A helical membrane pass occupies residues 5–25; the sequence is LILWLVIAVVLMSVFQSFGPS. The Periplasmic portion of the chain corresponds to 26–98; that stretch reads ESNGRKVDYS…VGEPPEEPSL (73 aa). A helical transmembrane segment spans residues 99-119; that stretch reads LASIFISWFPMLLLIGVWIFF. The Cytoplasmic portion of the chain corresponds to 120-644; sequence MRQMQGGGGK…NTMSEQLGDK (525 aa). Residue 192–199 coordinates ATP; it reads GPPGTGKT. His414 provides a ligand contact to Zn(2+). The active site involves Glu415. Zn(2+) contacts are provided by His418 and Asp492. The disordered stretch occupies residues 599–644; it reads RPPAGWEDPNGTNNSDSNGTPQAPRPVDEPRTPNPGNTMSEQLGDK. Polar residues-rich tracts occupy residues 608–619 and 632–644; these read NGTNNSDSNGTP and NPGNTMSEQLGDK.

This sequence in the central section; belongs to the AAA ATPase family. The protein in the C-terminal section; belongs to the peptidase M41 family. In terms of assembly, homohexamer. Requires Zn(2+) as cofactor.

The protein resides in the cell inner membrane. Acts as a processive, ATP-dependent zinc metallopeptidase for both cytoplasmic and membrane proteins. Plays a role in the quality control of integral membrane proteins. This Salmonella typhi protein is ATP-dependent zinc metalloprotease FtsH.